We begin with the raw amino-acid sequence, 110 residues long: Keratin, type I cytoskeletal 19 (110 aa).

Positions 1-8 (FGSGGVFR) are head. Ser3 is modified (phosphoserine). One can recognise an IF rod domain in the interval 7 to 110 (FRITMQNLND…KLEQEIATYR (104 aa)). An Omega-N-methylarginine modification is found at Arg8. The tract at residues 9-42 (ITMQNLNDRLASYLDKVRALEQANGELEVKIRDW) is coil 1A. A linker 1 region spans residues 43–45 (YQK). A coil 1B region spans residues 46-83 (IVLQIDNARTKFETEQALRVLDELTLARKNHEEEISAL). The coil 2 stretch occupies residues 85 to 110 (ADTERQNQEYQQLMDIKLEQEIATYR). Residues 85 to 110 (ADTERQNQEYQQLMDIKLEQEIATYR) form a necessary for interaction with PNN region.

This sequence belongs to the intermediate filament family. In terms of assembly, heterotetramer of two type I and two type II keratins. Interacts with PNN and the actin-binding domain of DMD.

In terms of biological role, involved in the organization of myofibers. Together with KRT8, helps to link the contractile apparatus to dystrophin at the costameres of striated muscle. The chain is Keratin, type I cytoskeletal 19 from Mesocricetus auratus (Golden hamster).